The primary structure comprises 181 residues: Malignant T-cell-amplified sequence 2 (181 aa).

Residues 92–171 enclose the PUA domain; that stretch reads LPHQQVDKGA…IGIENIHYLN (80 aa).

Belongs to the MCTS1 family.

The protein localises to the cytoplasm. This chain is Malignant T-cell-amplified sequence 2, found in Homo sapiens (Human).